A 241-amino-acid chain; its full sequence is Probable transcriptional regulatory protein CV_3123 (241 aa).

It belongs to the TACO1 family.

The protein resides in the cytoplasm. The protein is Probable transcriptional regulatory protein CV_3123 of Chromobacterium violaceum (strain ATCC 12472 / DSM 30191 / JCM 1249 / CCUG 213 / NBRC 12614 / NCIMB 9131 / NCTC 9757 / MK).